The primary structure comprises 459 residues: tRNA modification GTPase MnmE (459 aa).

Residues arginine 20, glutamate 85, and arginine 124 each contribute to the (6S)-5-formyl-5,6,7,8-tetrahydrofolate site. Positions 221 to 380 (GISTVIIGRP…LEEAIQSLFF (160 aa)) constitute a TrmE-type G domain. Residue asparagine 231 coordinates K(+). GTP contacts are provided by residues 231-236 (NVGKSS), 250-256 (TDIPGTT), and 275-278 (DTAG). Residue serine 235 coordinates Mg(2+). 3 residues coordinate K(+): threonine 250, isoleucine 252, and threonine 255. Mg(2+) is bound at residue threonine 256. Lysine 459 lines the (6S)-5-formyl-5,6,7,8-tetrahydrofolate pocket.

The protein belongs to the TRAFAC class TrmE-Era-EngA-EngB-Septin-like GTPase superfamily. TrmE GTPase family. As to quaternary structure, homodimer. Heterotetramer of two MnmE and two MnmG subunits. K(+) is required as a cofactor.

Its subcellular location is the cytoplasm. In terms of biological role, exhibits a very high intrinsic GTPase hydrolysis rate. Involved in the addition of a carboxymethylaminomethyl (cmnm) group at the wobble position (U34) of certain tRNAs, forming tRNA-cmnm(5)s(2)U34. This chain is tRNA modification GTPase MnmE, found in Bacillus licheniformis (strain ATCC 14580 / DSM 13 / JCM 2505 / CCUG 7422 / NBRC 12200 / NCIMB 9375 / NCTC 10341 / NRRL NRS-1264 / Gibson 46).